Consider the following 114-residue polypeptide: Hydrogenase maturation factor HypA (114 aa).

Histidine 2 is a binding site for Ni(2+). Zn(2+) contacts are provided by cysteine 73, cysteine 76, cysteine 90, and cysteine 93.

It belongs to the HypA/HybF family.

In terms of biological role, involved in the maturation of [NiFe] hydrogenases. Required for nickel insertion into the metal center of the hydrogenase. This is Hydrogenase maturation factor HypA from Klebsiella pneumoniae subsp. pneumoniae (strain ATCC 700721 / MGH 78578).